We begin with the raw amino-acid sequence, 165 residues long: Chorismate pyruvate-lyase (165 aa).

Residues Met35, Arg77, Leu115, and Glu156 each contribute to the substrate site.

This sequence belongs to the UbiC family. In terms of assembly, monomer.

It localises to the cytoplasm. It carries out the reaction chorismate = 4-hydroxybenzoate + pyruvate. It participates in cofactor biosynthesis; ubiquinone biosynthesis. Functionally, removes the pyruvyl group from chorismate, with concomitant aromatization of the ring, to provide 4-hydroxybenzoate (4HB) for the ubiquinone pathway. This Shigella sonnei (strain Ss046) protein is Chorismate pyruvate-lyase.